A 328-amino-acid chain; its full sequence is Tetraacyldisaccharide 4'-kinase (328 aa).

58-65 contributes to the ATP binding site; it reads TMGGAGKT.

Belongs to the LpxK family.

It carries out the reaction a lipid A disaccharide + ATP = a lipid IVA + ADP + H(+). It functions in the pathway glycolipid biosynthesis; lipid IV(A) biosynthesis; lipid IV(A) from (3R)-3-hydroxytetradecanoyl-[acyl-carrier-protein] and UDP-N-acetyl-alpha-D-glucosamine: step 6/6. Transfers the gamma-phosphate of ATP to the 4'-position of a tetraacyldisaccharide 1-phosphate intermediate (termed DS-1-P) to form tetraacyldisaccharide 1,4'-bis-phosphate (lipid IVA). This Phenylobacterium zucineum (strain HLK1) protein is Tetraacyldisaccharide 4'-kinase.